The following is a 233-amino-acid chain: tRNA1(Val) (adenine(37)-N6)-methyltransferase (233 aa).

This sequence belongs to the methyltransferase superfamily. tRNA (adenine-N(6)-)-methyltransferase family.

The protein resides in the cytoplasm. It carries out the reaction adenosine(37) in tRNA1(Val) + S-adenosyl-L-methionine = N(6)-methyladenosine(37) in tRNA1(Val) + S-adenosyl-L-homocysteine + H(+). In terms of biological role, specifically methylates the adenine in position 37 of tRNA(1)(Val) (anticodon cmo5UAC). The sequence is that of tRNA1(Val) (adenine(37)-N6)-methyltransferase from Shewanella amazonensis (strain ATCC BAA-1098 / SB2B).